Here is a 126-residue protein sequence, read N- to C-terminus: Holo-[acyl-carrier-protein] synthase (126 aa).

Residues D8 and E59 each contribute to the Mg(2+) site.

Belongs to the P-Pant transferase superfamily. AcpS family. Requires Mg(2+) as cofactor.

It is found in the cytoplasm. It catalyses the reaction apo-[ACP] + CoA = holo-[ACP] + adenosine 3',5'-bisphosphate + H(+). Functionally, transfers the 4'-phosphopantetheine moiety from coenzyme A to a Ser of acyl-carrier-protein. The protein is Holo-[acyl-carrier-protein] synthase of Rickettsia akari (strain Hartford).